Reading from the N-terminus, the 91-residue chain is Ribonuclease P protein component 4 (91 aa).

The Zn(2+) site is built by Cys-55, Cys-58, Cys-78, and Cys-81.

Belongs to the eukaryotic/archaeal RNase P protein component 4 family. As to quaternary structure, consists of a catalytic RNA component and at least 4-5 protein subunits. Zn(2+) is required as a cofactor.

The protein resides in the cytoplasm. It carries out the reaction Endonucleolytic cleavage of RNA, removing 5'-extranucleotides from tRNA precursor.. Its function is as follows. Part of ribonuclease P, a protein complex that generates mature tRNA molecules by cleaving their 5'-ends. This is Ribonuclease P protein component 4 from Thermoplasma acidophilum (strain ATCC 25905 / DSM 1728 / JCM 9062 / NBRC 15155 / AMRC-C165).